The following is a 144-amino-acid chain: Putative HTH-type transcriptional regulator aq_268 (144 aa).

The region spanning 2-133 (IFSDTVRYAL…KGTTIKDLIN (132 aa)) is the HTH rrf2-type domain.

This is Putative HTH-type transcriptional regulator aq_268 from Aquifex aeolicus (strain VF5).